Reading from the N-terminus, the 89-residue chain is Putative defensin-like protein 89 (89 aa).

Positions 1 to 25 (MGFKNNLSLVSVMVFALILLPMISG) are cleaved as a signal peptide. 4 disulfides stabilise this stretch: Cys-30-Cys-66, Cys-36-Cys-57, Cys-42-Cys-64, and Cys-46-Cys-65.

The protein belongs to the DEFL family.

It localises to the secreted. The polypeptide is Putative defensin-like protein 89 (Arabidopsis thaliana (Mouse-ear cress)).